A 445-amino-acid chain; its full sequence is Phenylacetate-coenzyme A ligase (445 aa).

The protein belongs to the phenylacetyl-CoA ligase family. As to quaternary structure, monomer.

It carries out the reaction 2-phenylacetate + ATP + CoA = phenylacetyl-CoA + AMP + diphosphate. Its pathway is aromatic compound metabolism; phenylacetate degradation. Catalyzes the activation of phenylacetic acid (PA) to phenylacetyl-CoA (PA-CoA). Involved in the phenylalanine metabolism. In Thermus thermophilus (strain ATCC BAA-163 / DSM 7039 / HB27), this protein is Phenylacetate-coenzyme A ligase.